The chain runs to 388 residues: Probable RNA-binding protein sce3 (388 aa).

Residues 18 to 84 (ESFGSTNWAD…GGMGSGYQRD (67 aa)) are disordered. The segment covering 38 to 50 (DRTTSTYRATPSS) has biased composition (polar residues). 3 positions are modified to phosphoserine: serine 49, serine 50, and serine 60. Threonine 61 carries the post-translational modification Phosphothreonine. Phosphoserine occurs at positions 64, 67, and 71. The region spanning 94 to 169 (FTAHVGNLSF…RPVRITVAEP (76 aa)) is the RRM domain. The span at 171–185 (RSFAREERSTGDWVR) shows a compositional bias: basic and acidic residues. The interval 171–388 (RSFAREERST…WTKIGKGRKH (218 aa)) is disordered. A Phosphoserine modification is found at serine 197. Residues 208–229 (RFRDPARDPSDRVREEPREWVR) are compositionally biased toward basic and acidic residues. The span at 248–257 (PRSSSNVNTE) shows a compositional bias: polar residues. 3 positions are modified to phosphoserine: serine 250, serine 251, and serine 252. Low complexity predominate over residues 258 to 268 (ATPSATTTTSS). The segment covering 289–349 (RVEEKLAKRT…LGDGEKKSSE (61 aa)) has biased composition (basic and acidic residues). The residue at position 347 (serine 347) is a Phosphoserine.

It localises to the cytoplasm. This Schizosaccharomyces pombe (strain 972 / ATCC 24843) (Fission yeast) protein is Probable RNA-binding protein sce3 (sce3).